Reading from the N-terminus, the 204-residue chain is Holliday junction branch migration complex subunit RuvA (204 aa).

The segment at 1 to 63 is domain I; that stretch reads MIGKLSGKVD…EEHIHLYGFL (63 aa). A domain II region spans residues 64 to 142; sequence TLEEKIFFNL…KISSGSAIIK (79 aa). The interval 143–149 is flexible linker; the sequence is ESLNIKN. The tract at residues 150–204 is domain III; the sequence is ITPVASNEVIKALVNLGFSRFEAQNAVQGIITQNPEISIDELIKTALKNRNSNFS.

It belongs to the RuvA family. Homotetramer. Forms an RuvA(8)-RuvB(12)-Holliday junction (HJ) complex. HJ DNA is sandwiched between 2 RuvA tetramers; dsDNA enters through RuvA and exits via RuvB. An RuvB hexamer assembles on each DNA strand where it exits the tetramer. Each RuvB hexamer is contacted by two RuvA subunits (via domain III) on 2 adjacent RuvB subunits; this complex drives branch migration. In the full resolvosome a probable DNA-RuvA(4)-RuvB(12)-RuvC(2) complex forms which resolves the HJ.

The protein resides in the cytoplasm. Its function is as follows. The RuvA-RuvB-RuvC complex processes Holliday junction (HJ) DNA during genetic recombination and DNA repair, while the RuvA-RuvB complex plays an important role in the rescue of blocked DNA replication forks via replication fork reversal (RFR). RuvA specifically binds to HJ cruciform DNA, conferring on it an open structure. The RuvB hexamer acts as an ATP-dependent pump, pulling dsDNA into and through the RuvAB complex. HJ branch migration allows RuvC to scan DNA until it finds its consensus sequence, where it cleaves and resolves the cruciform DNA. The protein is Holliday junction branch migration complex subunit RuvA of Rickettsia rickettsii (strain Iowa).